Consider the following 772-residue polypeptide: Metal transporter CNNM4 (772 aa).

Residues 1-175 (MAPGGGGGRR…SLLFMVEEHG (175 aa)) lie on the Extracellular side of the membrane. A glycan (N-linked (GlcNAc...) asparagine) is linked at Asn120. Residues 176–196 (RFLPLWLHILLVLVLLVLSGI) form a helical membrane-spanning segment. Residues 176–356 (RFLPLWLHIL…EPYNDLVKEE (181 aa)) form the CNNM transmembrane domain. The Cytoplasmic portion of the chain corresponds to 197–237 (FSGLNLGLMALDPMELRIVQNCGTEKERRYARKIEPIRRKG). An intramembrane region (helical) is located at residues 238–258 (NYLLCSLLLGNVLVNTSLTIL). Residues 259–261 (LDN) are Cytoplasmic-facing. Residues 262–282 (LIGSGIMAVASSTIGIVIFGE) form a helical membrane-spanning segment. Over 283-290 (ILPQALCS) the chain is Extracellular. A helical transmembrane segment spans residues 291–313 (RHGLAVGANTIVLTKIFMLLTFP). The Cytoplasmic segment spans residues 314-772 (LSFPISKLLD…LHRASQEGTI (459 aa)). CBS domains follow at residues 375–436 (MTQL…CTPL) and 443–509 (YNHP…ILDE). Positions 647–676 (PDRSPAHPTPLSRSASLSYPDRNTDMTPSS) are disordered. A phosphoserine mark is found at Ser658, Ser662, and Ser767.

This sequence belongs to the ACDP family. As to quaternary structure, interacts with COX11. Present in spinal cord dorsal horn neurons and in developing teeth (at protein level). In the tooth, higher expression is found in the ameloblasts during the transition and maturation phases of amelogenesis; reduced expression in the odontoblasts.

It is found in the cell membrane. Probable metal transporter. The interaction with the metal ion chaperone COX11 suggests that it may play a role in sensory neuron functions. May play a role in biomineralization and retinal function. This chain is Metal transporter CNNM4 (Cnnm4), found in Rattus norvegicus (Rat).